A 271-amino-acid polypeptide reads, in one-letter code: Rhomboid-type serine protease 2 (271 aa).

Transmembrane regions (helical) follow at residues 16-36 (GLAV…NLVY), 64-84 (HLSF…IVMF), 89-111 (GTLY…YCLI), 115-137 (LFPN…YFAV), 152-172 (FSFP…LLAP), and 176-196 (LPGH…ENWV). Serine 125 functions as the Nucleophile in the catalytic mechanism. Histidine 179 is an active-site residue. Positions 252 to 271 (HNTDTPAEPTFQGNGRVLGN) are disordered.

This sequence belongs to the peptidase S54 family.

Its subcellular location is the golgi apparatus membrane. The protein resides in the golgi apparatus. It localises to the cis-Golgi network membrane. It catalyses the reaction Cleaves type-1 transmembrane domains using a catalytic dyad composed of serine and histidine that are contributed by different transmembrane domains.. Probable rhomboid-type serine protease that catalyzes intramembrane proteolysis. The sequence is that of Rhomboid-type serine protease 2 (RBD2) from Kluyveromyces lactis (strain ATCC 8585 / CBS 2359 / DSM 70799 / NBRC 1267 / NRRL Y-1140 / WM37) (Yeast).